The chain runs to 287 residues: Ribosomal RNA small subunit methyltransferase I (287 aa).

Belongs to the methyltransferase superfamily. RsmI family.

It is found in the cytoplasm. It carries out the reaction cytidine(1402) in 16S rRNA + S-adenosyl-L-methionine = 2'-O-methylcytidine(1402) in 16S rRNA + S-adenosyl-L-homocysteine + H(+). Its function is as follows. Catalyzes the 2'-O-methylation of the ribose of cytidine 1402 (C1402) in 16S rRNA. The protein is Ribosomal RNA small subunit methyltransferase I of Streptococcus pyogenes serotype M3 (strain ATCC BAA-595 / MGAS315).